A 157-amino-acid chain; its full sequence is Small ribosomal subunit protein uS13 (157 aa).

This sequence belongs to the universal ribosomal protein uS13 family. In terms of assembly, part of the 30S ribosomal subunit. Forms a loose heterodimer with protein S19. Forms two bridges to the 50S subunit in the 70S ribosome.

In terms of biological role, located at the top of the head of the 30S subunit, it contacts several helices of the 16S rRNA. In the 70S ribosome it contacts the 23S rRNA (bridge B1a) and protein L5 of the 50S subunit (bridge B1b), connecting the 2 subunits; these bridges are implicated in subunit movement. This Thermofilum pendens (strain DSM 2475 / Hrk 5) protein is Small ribosomal subunit protein uS13.